Here is a 425-residue protein sequence, read N- to C-terminus: UPF0229 protein SG1344 (425 aa).

Positions 49 to 109 (GESVSIPNTD…GQGSVSQDGE (61 aa)) are disordered. The span at 50–59 (ESVSIPNTDI) shows a compositional bias: polar residues. A compositionally biased stretch (basic and acidic residues) spans 77-90 (PGNDHFVQNDRIER).

Belongs to the UPF0229 family.

This is UPF0229 protein SG1344 from Sodalis glossinidius (strain morsitans).